A 103-amino-acid chain; its full sequence is Large ribosomal subunit protein uL24 (103 aa).

The protein belongs to the universal ribosomal protein uL24 family. As to quaternary structure, part of the 50S ribosomal subunit.

Its function is as follows. One of two assembly initiator proteins, it binds directly to the 5'-end of the 23S rRNA, where it nucleates assembly of the 50S subunit. In terms of biological role, one of the proteins that surrounds the polypeptide exit tunnel on the outside of the subunit. The polypeptide is Large ribosomal subunit protein uL24 (Pasteurella multocida (strain Pm70)).